The primary structure comprises 448 residues: Adenosylhomocysteinase (448 aa).

3 residues coordinate substrate: Thr-61, Asp-136, and Glu-161. 162-164 (TTA) provides a ligand contact to NAD(+). Substrate-binding residues include Lys-191 and Asp-195. Residues Asn-196, 225–230 (GYGDVG), Glu-248, Asn-283, 304–306 (IGH), and Asn-360 contribute to the NAD(+) site.

The protein belongs to the adenosylhomocysteinase family. It depends on NAD(+) as a cofactor.

It localises to the cytoplasm. The enzyme catalyses S-adenosyl-L-homocysteine + H2O = L-homocysteine + adenosine. Its pathway is amino-acid biosynthesis; L-homocysteine biosynthesis; L-homocysteine from S-adenosyl-L-homocysteine: step 1/1. Functionally, may play a key role in the regulation of the intracellular concentration of adenosylhomocysteine. The protein is Adenosylhomocysteinase of Rhodopirellula baltica (strain DSM 10527 / NCIMB 13988 / SH1).